A 386-amino-acid chain; its full sequence is MVFFTCNACGESVKKIQVEKHVSICRNCECLSCIDCGKDFWGDDYKNHVKCISEDQKYGGKGYEAKTHKGDVKQQAWIQKINELIKKPNVSPKVRELLQQISAFDNVPRKKAKFQNWMRNSLKVHSDSVLEQVWNIFSEAASSEQDQQPPSHMAKPNTEVPTKVPSTKTNGTTEEQTEAKKNKRERKEERQKSRKKEKKELKLENHQENLKGQKPKKRKKGQEAGHEAGGEDAAEANGAPEKKRARDAQASEEGADRNGGPAEDADEGPTKTAAGKRKRQKHSEVESDNKKKKMKLPGQPEEGEPEDHEAPSKGKFNWKGTIKAVLKQAPDNEISVKKLKKKVIAQYHAVMSDHHTSEEELLAIFNKKISRNPTFKVLKDKVKLLK.

2 C2HC LYAR-type zinc fingers span residues 1 to 26 (MVFFTCNACGESVKKIQVEKHVSICR) and 28 to 52 (CECLSCIDCGKDFWGDDYKNHVKCI). Residues Cys6 and Cys9 each coordinate Zn(2+). A Glycyl lysine isopeptide (Lys-Gly) (interchain with G-Cter in SUMO2) cross-link involves residue Lys14. Residues His21, Cys25, Cys33, Cys36, His48, and Cys51 each coordinate Zn(2+). 2 stretches are compositionally biased toward polar residues: residues 141–150 (ASSEQDQQPP) and 164–174 (VPSTKTNGTTE). Positions 141 to 316 (ASSEQDQQPP…DHEAPSKGKF (176 aa)) are disordered. The stretch at 172–214 (TTEEQTEAKKNKRERKEERQKSRKKEKKELKLENHQENLKGQK) forms a coiled coil. 3 stretches are compositionally biased toward basic and acidic residues: residues 177-191 (TEAKKNKRERKEERQ), 198-211 (KKELKLENHQENLK), and 240-249 (PEKKRARDAQ). Lys202 participates in a covalent cross-link: Glycyl lysine isopeptide (Lys-Gly) (interchain with G-Cter in SUMO2).

Interacts with PRMT5; this interaction is direct. Interacts with GNL2 and RPL23A. Interacts with nucleolin/NCL; this interaction is direct. Interacts with phosphorylated IRF3; this interaction impairs IRF3 DNA-binding activity. Expressed in testis (at protein level).

The protein localises to the nucleus. It localises to the nucleolus. The protein resides in the cytoplasm. Its subcellular location is the cell projection. It is found in the cilium. The protein localises to the photoreceptor outer segment. Functionally, plays a role in the maintenance of the appropriate processing of 47S/45S pre-rRNA to 32S/30S pre-rRNAs and their subsequent processing to produce 18S and 28S rRNAs. Also acts at the level of transcription regulation. Along with PRMT5, binds embryonic globin promoter. Represses the expression of embryonic globin Hbb-y gene. In neuroblastoma cells, may also repress the expression of oxidative stress genes, including CHAC1, HMOX1, SLC7A11, ULBP1 and that encoding the small nucleolar RNA SNORD41. Preferentially binds to a DNA motif containing 5'-GGTTAT-3'. Negatively regulates the antiviral innate immune response by targeting IRF3 and impairing its DNA-binding activity. In addition, inhibits NF-kappa-B-mediated expression of pro-inflammatory cytokines. Stimulates phagocytosis of photoreceptor outer segments by retinal pigment epithelial cells. Prevents NCL self-cleavage, maintaining a normal steady-state level of NCL protein in undifferentiated embryonic stem cells (ESCs), which in turn is essential for ESC self-renewal. This chain is Cell growth-regulating nucleolar protein (Lyar), found in Rattus norvegicus (Rat).